The chain runs to 4235 residues: Tenellin synthetase (4235 aa).

Residues 15-455 (SEPIAIVGSA…GTNAHAIIER (441 aa)) form the Ketosynthase family 3 (KS3) domain. Residues Cys-189, His-326, and His-375 each act as for beta-ketoacyl synthase activity in the active site. A malonyl-CoA:ACP transacylase (MAT) domain region spans residues 590 to 924 (IFTGQGAQWP…ANDAVAFSTA (335 aa)). The N-terminal hotdog fold stretch occupies residues 993-1135 (HELLGRRMPD…GRIAVHLGAK (143 aa)). A dehydratase (DH) domain region spans residues 993–1310 (HELLGRRMPD…GFEVRAVGEP (318 aa)). Residues 993 to 1313 (HELLGRRMPD…VRAVGEPDAS (321 aa)) enclose the PKS/mFAS DH domain. His-1025 functions as the Proton acceptor; for dehydratase activity in the catalytic mechanism. Positions 1158–1313 (LQQLDCEKLY…VRAVGEPDAS (156 aa)) are C-terminal hotdog fold. Asp-1217 functions as the Proton donor; for dehydratase activity in the catalytic mechanism. The interval 1459 to 1652 (RLYTEDKGMH…FSGVDHIVHD (194 aa)) is methyltransferase (MT) domain. Residues 2208–2381 (TYLMVGAAGG…AASIIHVGHV (174 aa)) are ketoreductase (KR) domain. In terms of domain architecture, Carrier 1 spans 2500–2580 (EAAAAALKGF…QLSALAAKLA (81 aa)). At Ser-2540 the chain carries O-(pantetheine 4'-phosphoryl)serine. Positions 2587–2709 (RAQLEEASGN…EISSNGFFTQ (123 aa)) are disordered. The segment covering 2605 to 2619 (NDKETGPSKKGKAQE) has biased composition (basic and acidic residues). Composition is skewed to polar residues over residues 2645–2659 (GGSS…SSVS) and 2666–2678 (QEST…NNGE). Residues 2679–2695 (STPSKSSNCNSDSGSDN) are compositionally biased toward low complexity. Positions 2720-3163 (REAPMSPAQS…TAQSVGDCVV (444 aa)) are condensation (C) domain. Positions 3197–3609 (CQQHSTKSAI…DGTLLCFGRI (413 aa)) are adenylation (A) (KR) domain. The segment at 3724–3750 (DEAAAATSPSNDNNNNNTPSGGGGEKM) is disordered. A compositionally biased stretch (low complexity) spans 3726–3742 (AAAATSPSNDNNNNNTP). A Carrier 2 domain is found at 3748-3833 (EKMTVRQGEL…GMARCVAEQR (86 aa)). Ser-3793 bears the O-(pantetheine 4'-phosphoryl)serine mark. The tract at residues 3860–3889 (EKLQHSSASSSSSSSSSSAGSSSTQRPRKT) is disordered. A compositionally biased stretch (low complexity) spans 3865 to 3882 (SSASSSSSSSSSSAGSSS). The tract at residues 3896–4141 (LTGATGFLGG…LDFGQVDKVV (246 aa)) is reductase (RED) domain.

It in the C-terminal section; belongs to the NRP synthetase family.

The protein operates within secondary metabolite biosynthesis. Functionally, hybrid PKS-NRPS synthetase; part of the gene cluster that mediates the biosynthesis of tenellin-type 2-pyridones, iron-chelating compounds involved in iron stress tolerance, competition with the natural competitor fungus Metarhizium robertsii and insect hosts infection. TenS catalyzes the assembly of the polyketide-amino acid backbone. Because tenS lacks a designated enoylreductase (ER) domain, the required activity is provided the enoyl reductase tenC. Upon formation of the polyketide backbone on the thiotemplate, the triketide is transferred to the NRPS module and linked to tyrosine to produce the pyrrolidine-2-dione intermediates, including pretellinin A, 11-hydropretellenin A, 12-hydropretellenin A, 13-hydropretellenin A, 14-hydropretellenin A, 12-oxopretellenin A and prototellinin D. The pathway begins with the assembly of the polyketide-amino acid backbone by the hybrid PKS-NRPS tenS with the help of the enoyl reductase tenC. These enzymes catalyze the synthesis of the pyrrolidine-2-dione intermediates pretellinin A, 11-hydropretellenin A, 12-hydropretellenin A, 13-hydropretellenin A, 14-hydropretellenin A, 12-oxopretellenin A and prototellinin D. The cytochrome P450 monooxygenase tenA then catalyzes an oxidative ring expansion of pretenellin A and 14-hydropretellenin A to form the 2-pyridone core, leading to pretenellin B and pyridovericin, respectively. The cytochrome P450 monooxygenase tenB is then required for the selective N-hydroxylation of the 2-pyridone nitrogen of yield tellinin and 15-hydroxytellenin (15-HT), respectively. The UDP-glucosyltransferase GT1 and the methyltransferase MT1, located outside the tenS gene cluster, contribute to the stepwise glycosylation and methylation of 15-HT to obtain the glycoside pyridovericin-N-O-(4-O-methyl-beta-D-glucopyranoside) (PMGP). Additional related compounds such as 1-O-methyl-15-HT, (8Z)-1-O-methyl-15-HT, and O-methyltenellin A are also produced but the enzymes involved in their biosynthesis have still to be determined. The sequence is that of Tenellin synthetase from Beauveria bassiana (strain ARSEF 2860) (White muscardine disease fungus).